Reading from the N-terminus, the 1382-residue chain is MEVLMAERADLVFHNKVIDATAMKRLISRLIDHFGMAYTSHILDQVKTLGFQQATATSISLGIDDLLTIPSKGWLVQDAEQQSLILEKHHHYGNVHAVEKLRQSIEIWYATSEYLRQEMHPNFRMTDPSNPVHIMSFSGARGNASQVHQLVGMRGLMSDPQGQMIDLPIQSNLREGLSLTEYIISCYGARKGVVDTAVRTSDAGYLTRRLVEVVQHIVVRRTDCGTIRGISVSPRNGMTEKILIQTLIGRVLADDIYMGLRCIATRNQDIGIGLVNRFITFRAQSIYIRTPFICRSTSWICRLCYGRSPTHGDLVELGEAVGIIAGQSIGEPGTQLTLRTFHTGGVFTGGTAEHVRAPSNGKIKFNECLVHPTRTRHGHPAFLCYIDLYVTIESQDIIHNVNIPPKSFLLVQNDQYVESEQVIAEIRAGTSTFNFKERVRKHIYSDSEGEMHWSTDVYHAPEYRYGNVHLLPKTSHLWILSGGPCRSSIVPFSLHKDQDQMNVHSLSVERRYISDLSVTNDRVRHKLFSSDPSGKKKERILDYSGPDRIVSNGHWNFLYPAILHENSDLLAKRRRNRFIIPFQYDQEREKELMPRSGISIEIPINGILRRDTILAYFDDPRYRRSSSGITKYGTIEVDSIVKKEDLIEYRGAKEFRPKYQMKVDRFFFIPEEVHILPGSSPIMVRNNSIIGVDTRIALNTRSRVGGLVRVERKKKKIELKIFSGDIHFPGETDKISRHSGILIPPGTGKKNSKESKKWKNWIYVQRITPTKKKYFVSVRPVVTYEIADGINLGTLFPQDLLQERDNVQLRVVNYILYGNGKPIRGIYHTSIQLVRTCLVLNWDQDRNGSIEEVHASFVEVGTNDLIRDFIRIDLVKSPISYIGKRDDTTGSGLIPDNESDRTNINTFYSKTRIQSLTQHQGTIRTFLNRNKECQSFLILSSSDCSRIGPFNGSKSHKVTKESIKEDPMIPIRNSLGPLGTVPKIANFYSSYYLITHNQILLNKYLLLDNLKQTFQVLKYYLMDENGRIYNPNLHSNIIFNPFDLNWCFLRHDYCEETSTIISLGQFICENVCISKYGPHIKSGQVLIVHVDSLVIRSAKPHLATPGATVHGHYGEILSEGDTLVTFIYEKSRSGDITQGLPKVEQVLEVRSIDSISMNLEKRIEGWNEHITRILGIPWGFLIGAELTIAQSRISLVNKIQKVYRSQGVQIHNRHIEIIVRQITSKVLVSEDGMSNVFSPGELIGLLRAERTGRALEEGICYRAILLGITRASLNTQSFISEASFQETARVLAKAALRGRIDWLKGLKENVVLGGMIPVGTGFKGLVHRSRQHNNIPLEIKKKNLFEGEMRDILFHHRELLSSCIPKNFHDTSEQSFTGFNDS.

Zn(2+) contacts are provided by C224, C294, C301, and C304.

It belongs to the RNA polymerase beta' chain family. RpoC2 subfamily. In terms of assembly, in plastids the minimal PEP RNA polymerase catalytic core is composed of four subunits: alpha, beta, beta', and beta''. When a (nuclear-encoded) sigma factor is associated with the core the holoenzyme is formed, which can initiate transcription. Requires Zn(2+) as cofactor.

The protein resides in the plastid. The protein localises to the chloroplast. It carries out the reaction RNA(n) + a ribonucleoside 5'-triphosphate = RNA(n+1) + diphosphate. DNA-dependent RNA polymerase catalyzes the transcription of DNA into RNA using the four ribonucleoside triphosphates as substrates. This chain is DNA-directed RNA polymerase subunit beta'', found in Liriodendron tulipifera (Tuliptree).